The following is a 403-amino-acid chain: Guanine nucleotide-binding protein alpha-8 subunit (403 aa).

A lipid anchor (N-myristoyl glycine) is attached at G2. C3 carries the S-palmitoyl cysteine lipid modification. The 326-residue stretch at 31-356 (LDFRILLLGA…KVLMKATKDL (326 aa)) folds into the G-alpha domain. The interval 34-47 (RILLLGAGESGKST) is G1 motif. GTP is bound by residues 39–46 (GAGESGKS), 174–180 (IMTRVRT), 199–203 (DVGGQ), 268–271 (NKKD), and A324. Residues S46 and T180 each contribute to the Mg(2+) site. Positions 172-180 (DCIMTRVRT) are G2 motif. A G3 motif region spans residues 195-204 (FRVVDVGGQR). The G4 motif stretch occupies residues 264–271 (FLVLNKKD). A G5 motif region spans residues 322–327 (IAARYK). A disordered region spans residues 353 to 403 (TKDLKKSSKQSSKSSLGNSTQNNSNNNNNNNNSNNNNGQTTIDGATAKINS). A compositionally biased stretch (low complexity) spans 374–389 (NNSNNNNNNNNSNNNN). Residues 390–403 (GQTTIDGATAKINS) are compositionally biased toward polar residues.

The protein belongs to the G-alpha family. As to quaternary structure, g proteins are composed of 3 units; alpha, beta and gamma. The alpha chain contains the guanine nucleotide binding site.

In terms of biological role, guanine nucleotide-binding proteins (G proteins) are involved as modulators or transducers in various transmembrane signaling systems. G alpha-8 is a potential analog for the G(s)-like G-proteins which stimulate adenylate cyclase in mammals. The chain is Guanine nucleotide-binding protein alpha-8 subunit (gpaH) from Dictyostelium discoideum (Social amoeba).